The sequence spans 306 residues: Elongation factor Ts (306 aa).

Residues 81-84 (TDFV) form an involved in Mg(2+) ion dislocation from EF-Tu region.

Belongs to the EF-Ts family.

The protein resides in the cytoplasm. In terms of biological role, associates with the EF-Tu.GDP complex and induces the exchange of GDP to GTP. It remains bound to the aminoacyl-tRNA.EF-Tu.GTP complex up to the GTP hydrolysis stage on the ribosome. The chain is Elongation factor Ts from Polaromonas naphthalenivorans (strain CJ2).